We begin with the raw amino-acid sequence, 129 residues long: Glycine cleavage system H protein (129 aa).

Residues 24-106 (LLKIGVSEFA…IGEGWLVILK (83 aa)) enclose the Lipoyl-binding domain. Residue K65 is modified to N6-lipoyllysine.

It belongs to the GcvH family. In terms of assembly, the glycine cleavage system is composed of four proteins: P, T, L and H. The cofactor is (R)-lipoate.

Its function is as follows. The glycine cleavage system catalyzes the degradation of glycine. The H protein shuttles the methylamine group of glycine from the P protein to the T protein. The sequence is that of Glycine cleavage system H protein from Prochlorococcus marinus (strain AS9601).